Here is a 447-residue protein sequence, read N- to C-terminus: Tubulin beta chain (447 aa).

GTP is bound by residues Q11, E69, S138, G142, T143, G144, N204, and N226. Mg(2+) is bound at residue E69. Positions 424 to 447 (QYQEASVSEGEEEYDEEAPLEAEE) are disordered. A compositionally biased stretch (acidic residues) spans 432-447 (EGEEEYDEEAPLEAEE).

This sequence belongs to the tubulin family. In terms of assembly, dimer of alpha and beta chains. A typical microtubule is a hollow water-filled tube with an outer diameter of 25 nm and an inner diameter of 15 nM. Alpha-beta heterodimers associate head-to-tail to form protofilaments running lengthwise along the microtubule wall with the beta-tubulin subunit facing the microtubule plus end conferring a structural polarity. Microtubules usually have 13 protofilaments but different protofilament numbers can be found in some organisms and specialized cells. Mg(2+) serves as cofactor.

The protein localises to the cytoplasm. Its subcellular location is the cytoskeleton. Its function is as follows. Tubulin is the major constituent of microtubules, a cylinder consisting of laterally associated linear protofilaments composed of alpha- and beta-tubulin heterodimers. Microtubules grow by the addition of GTP-tubulin dimers to the microtubule end, where a stabilizing cap forms. Below the cap, tubulin dimers are in GDP-bound state, owing to GTPase activity of alpha-tubulin. This chain is Tubulin beta chain (TUB1), found in Cochliobolus heterostrophus (Southern corn leaf blight fungus).